The sequence spans 875 residues: Valine--tRNA ligase (875 aa).

The short motif at 45-55 is the 'HIGH' region element; the sequence is PNVTGVLHMGH. The 'KMSKS' region motif lies at 524 to 528; that stretch reads KMSKS. Lys-527 serves as a coordination point for ATP. Residues 803–837 are a coiled coil; that stretch reads VKSLIDKTKELIRLEKQLEKYKMLNISVSKKLENE.

The protein belongs to the class-I aminoacyl-tRNA synthetase family. ValS type 1 subfamily. Monomer.

The protein resides in the cytoplasm. The enzyme catalyses tRNA(Val) + L-valine + ATP = L-valyl-tRNA(Val) + AMP + diphosphate. Catalyzes the attachment of valine to tRNA(Val). As ValRS can inadvertently accommodate and process structurally similar amino acids such as threonine, to avoid such errors, it has a 'posttransfer' editing activity that hydrolyzes mischarged Thr-tRNA(Val) in a tRNA-dependent manner. The protein is Valine--tRNA ligase of Borreliella burgdorferi (strain ATCC 35210 / DSM 4680 / CIP 102532 / B31) (Borrelia burgdorferi).